A 283-amino-acid chain; its full sequence is Phosphatidylglycerol--prolipoprotein diacylglyceryl transferase (283 aa).

4 helical membrane passes run 20–40, 51–71, 97–117, and 123–143; these read LGPV…FVAM, GGNP…GIIG, ITNG…AVYF, and GVAF…AQAI. A 1,2-diacyl-sn-glycero-3-phospho-(1'-sn-glycerol) is bound at residue arginine 145. The next 2 membrane-spanning stretches (helical) occupy residues 192 to 212 and 255 to 275; these read VHPT…VLLW and INVI…FALR.

Belongs to the Lgt family.

The protein localises to the cell membrane. The catalysed reaction is L-cysteinyl-[prolipoprotein] + a 1,2-diacyl-sn-glycero-3-phospho-(1'-sn-glycerol) = an S-1,2-diacyl-sn-glyceryl-L-cysteinyl-[prolipoprotein] + sn-glycerol 1-phosphate + H(+). Its pathway is protein modification; lipoprotein biosynthesis (diacylglyceryl transfer). In terms of biological role, catalyzes the transfer of the diacylglyceryl group from phosphatidylglycerol to the sulfhydryl group of the N-terminal cysteine of a prolipoprotein, the first step in the formation of mature lipoproteins. The chain is Phosphatidylglycerol--prolipoprotein diacylglyceryl transferase from Corynebacterium diphtheriae (strain ATCC 700971 / NCTC 13129 / Biotype gravis).